The primary structure comprises 882 residues: Alanine--tRNA ligase (882 aa).

4 residues coordinate Zn(2+): H576, H580, C678, and H682.

The protein belongs to the class-II aminoacyl-tRNA synthetase family. Zn(2+) is required as a cofactor.

It is found in the cytoplasm. The enzyme catalyses tRNA(Ala) + L-alanine + ATP = L-alanyl-tRNA(Ala) + AMP + diphosphate. In terms of biological role, catalyzes the attachment of alanine to tRNA(Ala) in a two-step reaction: alanine is first activated by ATP to form Ala-AMP and then transferred to the acceptor end of tRNA(Ala). Also edits incorrectly charged Ser-tRNA(Ala) and Gly-tRNA(Ala) via its editing domain. The protein is Alanine--tRNA ligase of Anaplasma marginale (strain St. Maries).